A 399-amino-acid chain; its full sequence is Transcription termination factor 1, mitochondrial (399 aa).

The transit peptide at 1–57 (MQSLSLGQTSISKGLNYLTIMAPGNLWHMRNNFLFGSRCWMTRFSAENIFKSVSFRL) directs the protein to the mitochondrion. Interaction with DNA stretches follow at residues 169 to 170 (RS), 247 to 251 (QSTKR), 324 to 331 (AEKKFNDK), 355 to 358 (SIST), and 384 to 391 (SKKRYEAK).

This sequence belongs to the mTERF family. Monomer. In terms of processing, phosphoprotein with mostly four phosphate groups. While the DNA-binding activity is unaffected by the phosphorylation state, only the phosphorylated form of the protein is active for termination activity. Functioning seems to be regulated by phosphorylation.

The protein resides in the mitochondrion. Its function is as follows. Transcription termination factor. Binds to a 28 bp region within the tRNA(Leu(uur)) gene at a position immediately adjacent to and downstream of the 16S rRNA gene; this region comprises a tridecamer sequence critical for directing accurate termination. Binds DNA along the major grove and promotes DNA bending and partial unwinding. Promotes base flipping. Transcription termination activity appears to be polarized with highest specificity for transcripts initiated on the light strand. This is Transcription termination factor 1, mitochondrial (MTERF1) from Homo sapiens (Human).